The primary structure comprises 200 residues: Interferon lambda-1 (200 aa).

Residues Met1–Ala19 form the signal peptide. A glycan (N-linked (GlcNAc...) asparagine) is linked at Asn65. A disulfide bridge connects residues Cys68 and Cys164.

Belongs to the lambda interferon family.

The protein localises to the secreted. Functionally, cytokine with antiviral, antitumour and immunomodulatory activities. Plays a critical role in the antiviral host defense, predominantly in the epithelial tissues. Acts as a ligand for the heterodimeric class II cytokine receptor composed of IL10RB and IFNLR1, and receptor engagement leads to the activation of the JAK/STAT signaling pathway resulting in the expression of IFN-stimulated genes (ISG), which mediate the antiviral state. Has a restricted receptor distribution and therefore restricted targets: is primarily active in epithelial cells and this cell type-selective action is because of the epithelial cell-specific expression of its receptor IFNLR1. Exerts an immunomodulatory effect by up-regulating MHC class I antigen expression. The polypeptide is Interferon lambda-1 (IFNL1) (Homo sapiens (Human)).